The primary structure comprises 419 residues: Menaquinone reductase, integral membrane subunit (419 aa).

The next 10 membrane-spanning stretches (helical) occupy residues L23–A43, F61–F81, I98–V118, V143–L163, A176–S196, F221–V241, I270–A290, L316–L336, V341–M361, and W383–S403.

It belongs to the NrfD family. In terms of assembly, the Qrc complex is composed of four subunits: QrcA, QrcB, QrcC and QrcD. Can form a supercomplex with the [NiFe] hydrogenase HynA1 and the tetraheme Type I cytochrome c3 TpIc(3), its physiological electron donors.

The protein resides in the cell inner membrane. In terms of biological role, component of the respiratory Qrc complex, that catalyzes the reduction of the menaquinone pool using electrons transferred from the reduced periplasmic cytochrome c3, and which is probably involved in sulfate respiration. Is likely essential for growth on H(2) or formate since the periplasmic hydrogenases and/or formate dehydrogenases act as primary electron donors for the Qrc complex. The QrcD subunit anchors the protein complex to the membrane and likely interacts with the quinone pool. This Nitratidesulfovibrio vulgaris (strain ATCC 29579 / DSM 644 / CCUG 34227 / NCIMB 8303 / VKM B-1760 / Hildenborough) (Desulfovibrio vulgaris) protein is Menaquinone reductase, integral membrane subunit.